The primary structure comprises 31 residues: Cytochrome b6-f complex subunit 6 (31 aa).

The helical transmembrane segment at 3-23 (ILINYFLLVGFCFALASGLFL) threads the bilayer.

Belongs to the PetL family. As to quaternary structure, the 4 large subunits of the cytochrome b6-f complex are cytochrome b6, subunit IV (17 kDa polypeptide, PetD), cytochrome f and the Rieske protein, while the 4 small subunits are PetG, PetL, PetM and PetN. The complex functions as a dimer.

Its subcellular location is the plastid. It localises to the chloroplast thylakoid membrane. Component of the cytochrome b6-f complex, which mediates electron transfer between photosystem II (PSII) and photosystem I (PSI), cyclic electron flow around PSI, and state transitions. PetL is important for photoautotrophic growth as well as for electron transfer efficiency and stability of the cytochrome b6-f complex. This chain is Cytochrome b6-f complex subunit 6, found in Thalassiosira pseudonana (Marine diatom).